The primary structure comprises 484 residues: Aspartyl/glutamyl-tRNA(Asn/Gln) amidotransferase subunit B (484 aa).

Belongs to the GatB/GatE family. GatB subfamily. In terms of assembly, heterotrimer of A, B and C subunits.

The enzyme catalyses L-glutamyl-tRNA(Gln) + L-glutamine + ATP + H2O = L-glutaminyl-tRNA(Gln) + L-glutamate + ADP + phosphate + H(+). It catalyses the reaction L-aspartyl-tRNA(Asn) + L-glutamine + ATP + H2O = L-asparaginyl-tRNA(Asn) + L-glutamate + ADP + phosphate + 2 H(+). In terms of biological role, allows the formation of correctly charged Asn-tRNA(Asn) or Gln-tRNA(Gln) through the transamidation of misacylated Asp-tRNA(Asn) or Glu-tRNA(Gln) in organisms which lack either or both of asparaginyl-tRNA or glutaminyl-tRNA synthetases. The reaction takes place in the presence of glutamine and ATP through an activated phospho-Asp-tRNA(Asn) or phospho-Glu-tRNA(Gln). The protein is Aspartyl/glutamyl-tRNA(Asn/Gln) amidotransferase subunit B of Cupriavidus metallidurans (strain ATCC 43123 / DSM 2839 / NBRC 102507 / CH34) (Ralstonia metallidurans).